The sequence spans 377 residues: Compound eye opsin BCRH2 (377 aa).

Over 1 to 53 the chain is Extracellular; sequence MTNATGPQMAYYGAASMDFGYPEGVSIVDFVRPEIKPYVHQHWYNYPPVNPMW. Asn3 is a glycosylation site (N-linked (GlcNAc...) asparagine). A helical transmembrane segment spans residues 54–78; it reads HYLLGVIYLFLGTVSIFGNGLVIYL. Residues 79-90 lie on the Cytoplasmic side of the membrane; it reads FNKSAALRTPAN. A helical transmembrane segment spans residues 91–115; sequence ILVVNLALSDLIMLTTNVPFFTYNC. The Extracellular portion of the chain corresponds to 116–131; sequence FSGGVWMFSPQYCEIY. An intrachain disulfide couples Cys128 to Cys205. The helical transmembrane segment at 132-151 threads the bilayer; it reads ACLGAITGVCSIWLLCMISF. Topologically, residues 152–170 are cytoplasmic; sequence DRYNIICNGFNGPKLTTGK. The chain crosses the membrane as a helical span at residues 171–194; sequence AVVFALISWVIAIGCALPPFFGWG. Topologically, residues 195-218 are extracellular; the sequence is NYILEGILDSCSYDYLTQDFNTFS. Residues 219-246 traverse the membrane as a helical segment; the sequence is YNIFIFVFDYFLPAAIIVFSYVFIVKAI. The Cytoplasmic portion of the chain corresponds to 247–281; that stretch reads FAHEAAMRAQAKKMNVSTLRSNEADAQRAEIRIAK. Residues 282-305 traverse the membrane as a helical segment; that stretch reads TALVNVSLWFICWTPYALISLKGV. At 306–313 the chain is on the extracellular side; that stretch reads MGDTSGIT. A helical transmembrane segment spans residues 314–338; that stretch reads PLVSTLPALLAKSCSCYNPFVYAIS. N6-(retinylidene)lysine is present on Lys325. The Cytoplasmic portion of the chain corresponds to 339–377; sequence HPKYRLAITQHLPWFCVHETETKSNDDSQSNSTVAQDKA.

Belongs to the G-protein coupled receptor 1 family. Opsin subfamily. Phosphorylated on some or all of the serine and threonine residues present in the C-terminal region. As to expression, expressed in all of the seven retinular cells (R1-R7) forming the main rhabdom in each ommatidium.

The protein localises to the membrane. Functionally, visual pigments are the light-absorbing molecules that mediate vision. They consist of an apoprotein, opsin, covalently linked to cis-retinal. This opsin produces visual pigments with maximal absorption in the blue-green region of the spectrum. The protein is Compound eye opsin BCRH2 of Hemigrapsus sanguineus (Asian shore crab).